A 464-amino-acid chain; its full sequence is L-cystine uptake protein TcyP (464 aa).

10 helical membrane-spanning segments follow: residues 3–23 (TLLV…LYYM), 34–54 (VFTA…IYEP), 73–93 (YVKL…ISAF), 107–127 (GLII…GIAA), 184–204 (PTST…FIGV), 225–245 (IVMR…LALM), 263–283 (FVLA…LLIA), 347–367 (AGIY…IDPL), 371–391 (FILT…GVGG), and 395–415 (FAAL…ALVI).

The protein belongs to the dicarboxylate/amino acid:cation symporter (DAACS) (TC 2.A.23) family.

The protein localises to the membrane. Functionally, mediates uptake of L-cystine, the oxidized form of L-cysteine. This is L-cystine uptake protein TcyP from Bacillus cereus (strain ATCC 14579 / DSM 31 / CCUG 7414 / JCM 2152 / NBRC 15305 / NCIMB 9373 / NCTC 2599 / NRRL B-3711).